A 115-amino-acid polypeptide reads, in one-letter code: Mediator of RNA polymerase II transcription subunit 11 (115 aa).

Belongs to the Mediator complex subunit 11 family. Component of the Mediator complex.

It is found in the nucleus. In terms of biological role, component of the Mediator complex, a coactivator involved in the regulated transcription of nearly all RNA polymerase II-dependent genes. Mediator functions as a bridge to convey information from gene-specific regulatory proteins to the basal RNA polymerase II transcription machinery. The Mediator complex, having a compact conformation in its free form, is recruited to promoters by direct interactions with regulatory proteins and serves for the assembly of a functional pre-initiation complex with RNA polymerase II and the general transcription factors. This Arabidopsis thaliana (Mouse-ear cress) protein is Mediator of RNA polymerase II transcription subunit 11 (MED11).